Reading from the N-terminus, the 476-residue chain is Lipase (476 aa).

Residues 1–23 (MGIFDYKNLGTEGSKTLFADAMA) form the signal peptide. Ser-207 serves as the catalytic Charge relay system. Hemolysin-type calcium-binding repeat units follow at residues 372-389 (IGSD…ADFI), 390-407 (EGGK…HNTF), and 410-427 (SGHF…TDKL). Ca(2+) is bound by residues Asp-437, Asp-440, and Asp-448.

It belongs to the AB hydrolase superfamily. Lipase family.

The catalysed reaction is a triacylglycerol + H2O = a diacylglycerol + a fatty acid + H(+). The chain is Lipase from Pseudomonas fluorescens.